The following is a 1940-amino-acid chain: Myosin-2 (1940 aa).

One can recognise a Myosin N-terminal SH3-like domain in the interval 33–82 (DAKTSVFVAEPKESFVKGTIQSREGGKVTVKTEGGATLTVKEDQVFPMNP). Threonine 64 and threonine 69 each carry phosphothreonine. Positions 86–783 (DKIEDMAMMT…LLGLLEEMRD (698 aa)) constitute a Myosin motor domain. Lysine 130 is subject to N6,N6,N6-trimethyllysine. 179 to 186 (GESGAGKT) provides a ligand contact to ATP. Tyrosine 389 is subject to Phosphotyrosine. Phosphoserine is present on serine 392. Threonine 419 carries the post-translational modification Phosphothreonine. Residue serine 625 is modified to Phosphoserine. The actin-binding stretch occupies residues 660-682 (LNKLMTNLRSTHPHFVRCIIPNE). Histidine 758 carries the pros-methylhistidine modification. The actin-binding stretch occupies residues 762 to 776 (KFGHTKVFFKAGLLG). Positions 786 to 815 (LAQLMTRTQARCRGFLARVEYQKMVERRES) constitute an IQ domain. A coiled-coil region spans residues 844–1940 (LLKSAETEKE…EVHTKIISEE (1097 aa)). Residues serine 1093, serine 1097, serine 1163, and serine 1238 each carry the phosphoserine modification. Threonine 1242 bears the Phosphothreonine mark. Serine 1244 bears the Phosphoserine mark. A phosphothreonine mark is found at threonine 1256 and threonine 1287. Phosphoserine occurs at positions 1289, 1293, 1304, and 1307. Tyrosine 1465 bears the Phosphotyrosine mark. A Phosphothreonine modification is found at threonine 1468. At tyrosine 1493 the chain carries Phosphotyrosine. Position 1496 is a phosphoserine (serine 1496). Threonine 1502 is subject to Phosphothreonine. A Phosphoserine modification is found at serine 1515. At threonine 1518 the chain carries Phosphothreonine. 6 positions are modified to phosphoserine: serine 1543, serine 1555, serine 1575, serine 1601, serine 1715, and serine 1727. 2 positions are modified to phosphothreonine: threonine 1731 and threonine 1737. The disordered stretch occupies residues 1886–1905 (QAEEAEEQSNTNLSKFRKLQ).

The protein belongs to the TRAFAC class myosin-kinesin ATPase superfamily. Myosin family. Muscle myosin is a hexameric protein that consists of 2 heavy chain subunits (MHC), 2 alkali light chain subunits (MLC) and 2 regulatory light chain subunits (MLC-2). Interacts with GCSAM.

The protein resides in the cytoplasm. Its subcellular location is the myofibril. Functionally, myosins are actin-based motor molecules with ATPase activity essential for muscle contraction. This chain is Myosin-2 (MYH2), found in Bos taurus (Bovine).